A 224-amino-acid chain; its full sequence is Ribose-5-phosphate isomerase A 2 (224 aa).

Residues 27 to 30, 83 to 86, and 96 to 99 each bind substrate; these read SGST, DGTD, and KGGG. The active-site Proton acceptor is the glutamate 105. Lysine 123 lines the substrate pocket.

This sequence belongs to the ribose 5-phosphate isomerase family. In terms of assembly, homodimer.

The enzyme catalyses aldehydo-D-ribose 5-phosphate = D-ribulose 5-phosphate. The protein operates within carbohydrate degradation; pentose phosphate pathway; D-ribose 5-phosphate from D-ribulose 5-phosphate (non-oxidative stage): step 1/1. Functionally, catalyzes the reversible conversion of ribose-5-phosphate to ribulose 5-phosphate. In Oceanobacillus iheyensis (strain DSM 14371 / CIP 107618 / JCM 11309 / KCTC 3954 / HTE831), this protein is Ribose-5-phosphate isomerase A 2.